We begin with the raw amino-acid sequence, 94 residues long: Co-chaperonin GroES (94 aa).

The protein belongs to the GroES chaperonin family. Heptamer of 7 subunits arranged in a ring. Interacts with the chaperonin GroEL.

The protein resides in the cytoplasm. Its function is as follows. Together with the chaperonin GroEL, plays an essential role in assisting protein folding. The GroEL-GroES system forms a nano-cage that allows encapsulation of the non-native substrate proteins and provides a physical environment optimized to promote and accelerate protein folding. GroES binds to the apical surface of the GroEL ring, thereby capping the opening of the GroEL channel. This chain is Co-chaperonin GroES, found in Parageobacillus thermoglucosidasius (Geobacillus thermoglucosidasius).